A 351-amino-acid chain; its full sequence is Peroxidase C1B (351 aa).

The signal sequence occupies residues 1 to 28 (MHSPSSTSFTWILITLGCLAFYASLSDA). Disulfide bonds link C39–C119, C72–C77, C125–C329, and C205–C237. An N-linked (GlcNAc...) asparagine glycan is attached at N41. The active-site Proton acceptor is H70. Residues D71, V74, G76, D78, and S80 each contribute to the Ca(2+) site. N85 carries an N-linked (GlcNAc...) asparagine glycan. P167 is a binding site for substrate. Position 198 (H198) interacts with heme b. T199 is a binding site for Ca(2+). N-linked (GlcNAc...) asparagine glycans are attached at residues N214, N226, and N242. Residues D250, T253, and D258 each contribute to the Ca(2+) site. A glycan (N-linked (GlcNAc...) asparagine) is linked at N283.

Belongs to the peroxidase family. Classical plant (class III) peroxidase subfamily. It depends on Ca(2+) as a cofactor. Heme b is required as a cofactor.

It localises to the secreted. Its subcellular location is the vacuole. It catalyses the reaction 2 a phenolic donor + H2O2 = 2 a phenolic radical donor + 2 H2O. Its function is as follows. Removal of H(2)O(2), oxidation of toxic reductants, biosynthesis and degradation of lignin, suberization, auxin catabolism, response to environmental stresses such as wounding, pathogen attack and oxidative stress. These functions might be dependent on each isozyme/isoform in each plant tissue. The protein is Peroxidase C1B (PRXC1B) of Armoracia rusticana (Horseradish).